We begin with the raw amino-acid sequence, 211 residues long: Interleukin-6 (211 aa).

A signal peptide spans 1–25 (MNSLSTSTFSPVAFSLGLLLVMATA). Cys-71 and Cys-77 are disulfide-bonded. A Phosphoserine modification is found at Ser-80. The cysteines at positions 100 and 110 are disulfide-linked.

The protein belongs to the IL-6 superfamily. In terms of assembly, component of a hexamer of two molecules each of IL6, IL6R and IL6ST; first binds to IL6R to associate with the signaling subunit IL6ST. Interacts with IL6R (via the N-terminal ectodomain); this interaction may be affected by IL6R-binding with SORL1, hence decreasing IL6 cis signaling. Interacts with SORL1 (via the N-terminal ectodomain); this interaction leads to IL6 internalization and lysosomal degradation. May form a trimeric complex with the soluble SORL1 ectodomain and soluble IL6R receptor; this interaction might stabilize circulating IL6, hence promoting IL6 trans signaling.

The protein localises to the secreted. Cytokine with a wide variety of biological functions in immunity, tissue regeneration, and metabolism. Binds to IL6R, then the complex associates to the signaling subunit IL6ST/gp130 to trigger the intracellular IL6-signaling pathway. The interaction with the membrane-bound IL6R and IL6ST stimulates 'classic signaling', whereas the binding of IL6 and soluble IL6R to IL6ST stimulates 'trans-signaling'. Alternatively, 'cluster signaling' occurs when membrane-bound IL6:IL6R complexes on transmitter cells activate IL6ST receptors on neighboring receiver cells. Its function is as follows. IL6 is a potent inducer of the acute phase response. Rapid production of IL6 contributes to host defense during infection and tissue injury, but excessive IL6 synthesis is involved in disease pathology. In the innate immune response, is synthesized by myeloid cells, such as macrophages and dendritic cells, upon recognition of pathogens through toll-like receptors (TLRs) at the site of infection or tissue injury. In the adaptive immune response, is required for the differentiation of B cells into immunoglobulin-secreting cells. Plays a major role in the differentiation of CD4(+) T cell subsets. Essential factor for the development of T follicular helper (Tfh) cells that are required for the induction of germinal-center formation. Required to drive naive CD4(+) T cells to the Th17 lineage. Also required for proliferation of myeloma cells and the survival of plasmablast cells. In terms of biological role, acts as an essential factor in bone homeostasis and on vessels directly or indirectly by induction of VEGF, resulting in increased angiogenesis activity and vascular permeability. Induces, through 'trans-signaling' and synergistically with IL1B and TNF, the production of VEGF. Involved in metabolic controls, is discharged into the bloodstream after muscle contraction increasing lipolysis and improving insulin resistance. 'Trans-signaling' in central nervous system also regulates energy and glucose homeostasis. Mediates, through GLP-1, crosstalk between insulin-sensitive tissues, intestinal L cells and pancreatic islets to adapt to changes in insulin demand. Also acts as a myokine. Plays a protective role during liver injury, being required for maintenance of tissue regeneration. Also has a pivotal role in iron metabolism by regulating HAMP/hepcidin expression upon inflammation or bacterial infection. Through activation of IL6ST-YAP-NOTCH pathway, induces inflammation-induced epithelial regeneration. The protein is Interleukin-6 (IL6) of Lama glama (Llama).